A 222-amino-acid polypeptide reads, in one-letter code: N-(5'-phosphoribosyl)anthranilate isomerase (222 aa).

Belongs to the TrpF family.

The catalysed reaction is N-(5-phospho-beta-D-ribosyl)anthranilate = 1-(2-carboxyphenylamino)-1-deoxy-D-ribulose 5-phosphate. It participates in amino-acid biosynthesis; L-tryptophan biosynthesis; L-tryptophan from chorismate: step 3/5. The sequence is that of N-(5'-phosphoribosyl)anthranilate isomerase from Prosthecochloris aestuarii (strain DSM 271 / SK 413).